The chain runs to 176 residues: NADH:riboflavin 5'-phosphate oxidoreductase (176 aa).

Its function is as follows. Provides the reduced form of flavin mononucleotide for the PIIA synthase reaction. In Streptomyces pristinaespiralis, this protein is NADH:riboflavin 5'-phosphate oxidoreductase (snaC).